Here is a 236-residue protein sequence, read N- to C-terminus: Phosphoribosylaminoimidazole-succinocarboxamide synthase (236 aa).

The protein belongs to the SAICAR synthetase family.

The catalysed reaction is 5-amino-1-(5-phospho-D-ribosyl)imidazole-4-carboxylate + L-aspartate + ATP = (2S)-2-[5-amino-1-(5-phospho-beta-D-ribosyl)imidazole-4-carboxamido]succinate + ADP + phosphate + 2 H(+). It functions in the pathway purine metabolism; IMP biosynthesis via de novo pathway; 5-amino-1-(5-phospho-D-ribosyl)imidazole-4-carboxamide from 5-amino-1-(5-phospho-D-ribosyl)imidazole-4-carboxylate: step 1/2. The polypeptide is Phosphoribosylaminoimidazole-succinocarboxamide synthase (Rickettsia bellii (strain OSU 85-389)).